We begin with the raw amino-acid sequence, 439 residues long: MSSSSGKVGFVSLGCPKNTVDSERILTQLRTEGYEISASYEDADVVLVNTCGFIDSAVQESLDAIGEALRENGKVIVTGCLGAKEDVIREVHPKVLAVSGPHAYTEVMNQVHQVAPKPEYNPFVNLVPDTGVKLTPKHYAYLKISEGCNHRCTFCIIPSFRGDLVSRPIGDVLGEAQRLVKNGVKELLVISQDTSAYGVDTKYRTGFWEGRPVKTRMKELCDELGRMGVWVRLHYVYPYPHVDDVIPLMADGKILPYLDIPFQHASPSVLKNMRRPAHAEKVLHRIGKWREQCPDITLRSTFIVGFPGETEEDFQTLLNFLEEAQLDRVGCFKYSPVEGATANELPDPVEEVVKQERWERFMEVQQRISASRLQAKIGKRMDVIVDEVVEEGAVCRSKADAPEIDGQVFLDNQTHLKPGDLVTVEIEDADEYDLWGRPV.

The region spanning Gly-6–Pro-116 is the MTTase N-terminal domain. Residues Cys-15, Cys-51, Cys-80, Cys-148, Cys-152, and Cys-155 each coordinate [4Fe-4S] cluster. Residues Leu-134–Ser-371 form the Radical SAM core domain. Positions Gln-374 to Val-439 constitute a TRAM domain.

This sequence belongs to the methylthiotransferase family. RimO subfamily. Requires [4Fe-4S] cluster as cofactor.

It localises to the cytoplasm. The enzyme catalyses L-aspartate(89)-[ribosomal protein uS12]-hydrogen + (sulfur carrier)-SH + AH2 + 2 S-adenosyl-L-methionine = 3-methylsulfanyl-L-aspartate(89)-[ribosomal protein uS12]-hydrogen + (sulfur carrier)-H + 5'-deoxyadenosine + L-methionine + A + S-adenosyl-L-homocysteine + 2 H(+). Its function is as follows. Catalyzes the methylthiolation of an aspartic acid residue of ribosomal protein uS12. The sequence is that of Ribosomal protein uS12 methylthiotransferase RimO from Hahella chejuensis (strain KCTC 2396).